A 652-amino-acid chain; its full sequence is Proline-rich receptor-like protein kinase PERK1 (652 aa).

The segment at 1–137 is disordered; the sequence is MSTAPSPGTT…PPSDSSDGLS (137 aa). The Extracellular portion of the chain corresponds to 1–139; sequence MSTAPSPGTT…SDSSDGLSTG (139 aa). Residues 8-19 are compositionally biased toward pro residues; that stretch reads GTTPSPSPPSPP. Asparagine 21 and asparagine 50 each carry an N-linked (GlcNAc...) asparagine glycan. The segment covering 26–112 has biased composition (pro residues); sequence TPPPAASSPP…PSPNQGPPNT (87 aa). The span at 113-137 shows a compositional bias: low complexity; the sequence is PSGSTPRTPSNTKPSPPSDSSDGLS. A helical transmembrane segment spans residues 140 to 160; the sequence is VVVGIAIGGVAILVILTLICL. Residues 161–652 are Cytoplasmic-facing; it reads LCKKKRRRRH…TGQGYSGPSL (492 aa). Residues 169–251 are disordered; that stretch reads RHDDEAAYYV…GGSDYSDLPV (83 aa). The span at 203-213 shows a compositional bias: polar residues; the sequence is NASRPSDNHVV. Over residues 216 to 236 the composition is skewed to pro residues; it reads LPPPKPPSPPRKPPPPPPPPA. Threonine 269 carries the post-translational modification Phosphothreonine. The region spanning 280 to 559 is the Protein kinase domain; that stretch reads FSEANLLGQG…VRALEGNVSL (280 aa). ATP-binding positions include 286 to 294 and lysine 308; that span reads LGQGGFGYV. The residue at position 353 (tyrosine 353) is a Phosphotyrosine. The active-site Proton acceptor is the aspartate 404. Phosphoserine is present on residues serine 408 and serine 437. 2 positions are modified to phosphothreonine: threonine 438 and threonine 443. Tyrosine 451 is subject to Phosphotyrosine. Residues 605–616 are compositionally biased toward polar residues; it reads YGTTGEYSNPTS. The disordered stretch occupies residues 605–652; that stretch reads YGTTGEYSNPTSDYGLYPSGSSSEGQATREMEMGKIKKTGQGYSGPSL.

This sequence belongs to the protein kinase superfamily. Ser/Thr protein kinase family. Mostly expressed in inflorescence bolt, flower buds and siliques, and, to a lower extent, in roots, seedlings and leaves.

The protein localises to the cell membrane. It catalyses the reaction L-seryl-[protein] + ATP = O-phospho-L-seryl-[protein] + ADP + H(+). It carries out the reaction L-threonyl-[protein] + ATP = O-phospho-L-threonyl-[protein] + ADP + H(+). The protein is Proline-rich receptor-like protein kinase PERK1 (PERK1) of Arabidopsis thaliana (Mouse-ear cress).